The sequence spans 149 residues: Large-conductance mechanosensitive channel (149 aa).

Transmembrane regions (helical) follow at residues 8–28 (FIMR…SAFT) and 74–94 (IGSV…LFLI).

It belongs to the MscL family. As to quaternary structure, homopentamer.

The protein resides in the cell membrane. Channel that opens in response to stretch forces in the membrane lipid bilayer. May participate in the regulation of osmotic pressure changes within the cell. This is Large-conductance mechanosensitive channel from Enterococcus faecalis (strain ATCC 700802 / V583).